A 73-amino-acid chain; its full sequence is Tetrahydromethanopterin S-methyltransferase subunit F (73 aa).

The chain crosses the membrane as a helical span at residues 52-72 (IGFAAGFLFSLLMVIVLPLLF).

It belongs to the MtrF family. In terms of assembly, the complex is composed of 8 subunits; MtrA, MtrB, MtrC, MtrD, MtrE, MtrF, MtrG and MtrH.

Its subcellular location is the cell membrane. It carries out the reaction 5-methyl-5,6,7,8-tetrahydromethanopterin + coenzyme M + 2 Na(+)(in) = 5,6,7,8-tetrahydromethanopterin + methyl-coenzyme M + 2 Na(+)(out). It participates in one-carbon metabolism; methanogenesis from CO(2); methyl-coenzyme M from 5,10-methylene-5,6,7,8-tetrahydromethanopterin: step 2/2. Functionally, part of a complex that catalyzes the formation of methyl-coenzyme M and tetrahydromethanopterin from coenzyme M and methyl-tetrahydromethanopterin. This is an energy-conserving, sodium-ion translocating step. The sequence is that of Tetrahydromethanopterin S-methyltransferase subunit F from Methanosarcina barkeri (strain Fusaro / DSM 804).